Consider the following 513-residue polypeptide: ATP synthase subunit alpha (513 aa).

169–176 (GDRQIGKT) contributes to the ATP binding site.

The protein belongs to the ATPase alpha/beta chains family. In terms of assembly, F-type ATPases have 2 components, CF(1) - the catalytic core - and CF(0) - the membrane proton channel. CF(1) has five subunits: alpha(3), beta(3), gamma(1), delta(1), epsilon(1). CF(0) has three main subunits: a(1), b(2) and c(9-12). The alpha and beta chains form an alternating ring which encloses part of the gamma chain. CF(1) is attached to CF(0) by a central stalk formed by the gamma and epsilon chains, while a peripheral stalk is formed by the delta and b chains.

The protein resides in the cell inner membrane. The enzyme catalyses ATP + H2O + 4 H(+)(in) = ADP + phosphate + 5 H(+)(out). Its function is as follows. Produces ATP from ADP in the presence of a proton gradient across the membrane. The alpha chain is a regulatory subunit. This is ATP synthase subunit alpha from Francisella tularensis subsp. novicida (strain U112).